We begin with the raw amino-acid sequence, 440 residues long: FAD-dependent monooxygenase afoD (440 aa).

A helical membrane pass occupies residues 10–30 (PLSIAIIGGGIIGLMTALGLL). Glu41, Leu145, and Asp320 together coordinate FAD. N-linked (GlcNAc...) asparagine glycosylation occurs at Asn352.

It belongs to the paxM FAD-dependent monooxygenase family. It depends on FAD as a cofactor.

It localises to the membrane. Its function is as follows. FAD-dependent monooxygenase; part of the gene cluster that mediates the biosynthesis of asperfuranone, a probable antitumor agent. The polyketide synthase afoG is responsible for producing the 3,5-dimethyloctadienone moiety from acetyl-CoA, three malonyl-CoA, and two S-adenosyl methionines (SAM). The 3,5-dimethyloctadienone moiety is then loaded onto the SAT domain of afoE and extended with four malonyl-CoA and one SAM, which leads to the formation of 2,4-dihydroxy-6-(5,7-dimethyl-2-oxo-trans-3-trans-5-nonadienyl)-3-methylbenzaldehyde (compound 2) after reductive release and aldol condensation. AfoD is the next enzyme in the biosynthesis sequence and hydroxylates the side chain at the benzylic position of compound 2. After benzylic hydroxylation, a furan ring is formed after five-member ring hemiacetal formation and water elimination. AfoF and afoC are proposed to oxidize the R-diketone proton and to reduce the unconjugated carbonyl group, respectively, to generate asperfuranone. Since no intermediates could be isolated from afoF and afoC deletants, the sequence of these two enzymes is not fully understood. Moreover, since afoC deletant still produces a small amount of asperfuranone, other endogenous oxidoreductases might catalyze the same reaction with much less efficiency. This is FAD-dependent monooxygenase afoD from Emericella nidulans (strain FGSC A4 / ATCC 38163 / CBS 112.46 / NRRL 194 / M139) (Aspergillus nidulans).